Here is a 288-residue protein sequence, read N- to C-terminus: UDP-3-O-acyl-N-acetylglucosamine deacetylase (288 aa).

Residues histidine 79, histidine 236, and aspartate 240 each coordinate Zn(2+). Histidine 263 serves as the catalytic Proton donor.

This sequence belongs to the LpxC family. Zn(2+) is required as a cofactor.

It carries out the reaction a UDP-3-O-[(3R)-3-hydroxyacyl]-N-acetyl-alpha-D-glucosamine + H2O = a UDP-3-O-[(3R)-3-hydroxyacyl]-alpha-D-glucosamine + acetate. Its pathway is glycolipid biosynthesis; lipid IV(A) biosynthesis; lipid IV(A) from (3R)-3-hydroxytetradecanoyl-[acyl-carrier-protein] and UDP-N-acetyl-alpha-D-glucosamine: step 2/6. In terms of biological role, catalyzes the hydrolysis of UDP-3-O-myristoyl-N-acetylglucosamine to form UDP-3-O-myristoylglucosamine and acetate, the committed step in lipid A biosynthesis. This is UDP-3-O-acyl-N-acetylglucosamine deacetylase from Rickettsia felis (strain ATCC VR-1525 / URRWXCal2) (Rickettsia azadi).